Reading from the N-terminus, the 491-residue chain is Glutamyl-tRNA(Gln) amidotransferase subunit A (491 aa).

Residues lysine 77 and serine 152 each act as charge relay system in the active site. Serine 176 (acyl-ester intermediate) is an active-site residue.

The protein belongs to the amidase family. GatA subfamily. Heterotrimer of A, B and C subunits.

The catalysed reaction is L-glutamyl-tRNA(Gln) + L-glutamine + ATP + H2O = L-glutaminyl-tRNA(Gln) + L-glutamate + ADP + phosphate + H(+). Its function is as follows. Allows the formation of correctly charged Gln-tRNA(Gln) through the transamidation of misacylated Glu-tRNA(Gln) in organisms which lack glutaminyl-tRNA synthetase. The reaction takes place in the presence of glutamine and ATP through an activated gamma-phospho-Glu-tRNA(Gln). In Chlamydia trachomatis serovar A (strain ATCC VR-571B / DSM 19440 / HAR-13), this protein is Glutamyl-tRNA(Gln) amidotransferase subunit A.